A 512-amino-acid polypeptide reads, in one-letter code: Reduced folate transporter (512 aa).

N-acetylmethionine is present on Met1. The Cytoplasmic portion of the chain corresponds to 1–29 (MVPTGQVAEKQACEEPRQDRELKSWRWLV). The helical transmembrane segment at 30-50 (FYLCFFGFMAQLRPGESFITP) threads the bilayer. Folate is bound by residues Ile48 and Thr49. Over 51 to 62 (YLLERNFTKEQV) the chain is Extracellular. Residue Asn56 is glycosylated (N-linked (GlcNAc...) asparagine). A helical transmembrane segment spans residues 63 to 85 (TNEIIPMLPYSHLAVLVPIFLLT). Residues 86 to 89 (DYLR) lie on the Cytoplasmic side of the membrane. A helical transmembrane segment spans residues 90–110 (YKPVLVLQCLSFVCVWLLLLL). Topologically, residues 111 to 114 (GTSV) are extracellular. The chain crosses the membrane as a helical span at residues 115 to 137 (VHMQLMEVFYSITMAARIAYSSY). Glu121 and Arg131 together coordinate folate. Residues 138 to 151 (IFSLVQPSRYQRMA) are Cytoplasmic-facing. A helical membrane pass occupies residues 152 to 176 (SYSRAAVLLGVFISSVLGQVLVTLG). Val162 serves as a coordination point for folate. The Extracellular segment spans residues 177–181 (GISTY). The helical transmembrane segment at 182 to 200 (MLNCISLGFILFSLSLSLF) threads the bilayer. Topologically, residues 201-266 (LKRPKRSLFF…ELVKNVRQPQ (66 aa)) are cytoplasmic. A helical membrane pass occupies residues 267-292 (LRLWCLWWVFNSAGYYLITYYVHVLW). Folate is bound by residues Tyr281, Tyr282, and Tyr286. The Extracellular portion of the chain corresponds to 293–300 (KITDSRLN). A helical membrane pass occupies residues 301–323 (YNGAVDAASTLLSAITAFTAGFV). Residues 324–329 (NIRWAL) lie on the Cytoplasmic side of the membrane. The helical transmembrane segment at 330–350 (WSKLVIASVIAIQAGLVFCMF) threads the bilayer. Over 351-353 (QIP) the chain is Extracellular. Residues 354–377 (DIWVCYVTFVLFRGAYQFLVPIAT) form a helical membrane-spanning segment. Residues Arg366 and Gln370 each contribute to the folate site. Residues 378–391 (FQIASSLSKELCAL) are Cytoplasmic-facing. A helical transmembrane segment spans residues 392-415 (VFGINTFLATALKTSITLVVSDKR). Positions 400 to 412 (ATALKTSITLVVS) are required for substrate-binding. The Extracellular segment spans residues 416–423 (GLGLQVHQ). Residues 424-448 (QFRIYFMYFLTLSIICLAWAGLDGL) form a helical membrane-spanning segment. The Cytoplasmic segment spans residues 449 to 512 (RYYRRGRHQP…RADLRVEAKA (64 aa)). Ser466, Ser471, and Ser476 each carry phosphoserine. The interval 479 to 512 (DGDLRRPQPSAPQLLPEDGSVEDGRADLRVEAKA) is disordered. Over residues 500-512 (EDGRADLRVEAKA) the composition is skewed to basic and acidic residues.

It belongs to the reduced folate carrier (RFC) transporter (TC 2.A.48) family. As to expression, expressed in liver, heart, brain, spleen, lung and skeletal muscle.

The protein localises to the cell membrane. It localises to the apical cell membrane. Its subcellular location is the basolateral cell membrane. It carries out the reaction 5-amino-1-(5-phospho-beta-D-ribosyl)imidazole-4-carboxamide(in) + (6S)-5-methyl-5,6,7,8-tetrahydrofolate(out) = 5-amino-1-(5-phospho-beta-D-ribosyl)imidazole-4-carboxamide(out) + (6S)-5-methyl-5,6,7,8-tetrahydrofolate(in). Its function is as follows. Antiporter that mediates the import of reduced folates, driven by the export of organic anions. Also acts as an importer of immunoreactive cyclic dinucleotides, but with a lower transporter activity. Mechanistically, acts as a secondary active transporter, which exports intracellular organic anions down their concentration gradients to facilitate the uptake of its substrates. Has high affinity for N5-methyltetrahydrofolate, the predominant circulating form of folate. Also mediates the import of antifolate drug methotrexate. 5-amino-4-imidazolecarboxamide riboside (AICAR), when phosphorylated to AICAR monophosphate, can serve as an organic anion for antiporter activity. This Rattus norvegicus (Rat) protein is Reduced folate transporter.